Consider the following 248-residue polypeptide: Cytochrome c oxidase subunit 2 (248 aa).

The Mitochondrial intermembrane portion of the chain corresponds to Met1–Asn39. Residues Val40–Tyr56 form a helical membrane-spanning segment. Residues Asn57 to Ala87 are Mitochondrial matrix-facing. Residues Val88–Cys104 traverse the membrane as a helical segment. The Mitochondrial intermembrane segment spans residues Asp105–Gln248. His183, Cys218, Glu220, Cys222, His226, and Met229 together coordinate Cu cation. Glu220 is a Mg(2+) binding site.

The protein belongs to the cytochrome c oxidase subunit 2 family. Component of the cytochrome c oxidase (complex IV, CIV), a multisubunit enzyme composed of a catalytic core of 3 subunits and several supernumerary subunits. The complex exists as a monomer or a dimer and forms supercomplexes (SCs) in the inner mitochondrial membrane with ubiquinol-cytochrome c oxidoreductase (cytochrome b-c1 complex, complex III, CIII). Cu cation serves as cofactor.

It is found in the mitochondrion inner membrane. It catalyses the reaction 4 Fe(II)-[cytochrome c] + O2 + 8 H(+)(in) = 4 Fe(III)-[cytochrome c] + 2 H2O + 4 H(+)(out). Functionally, component of the cytochrome c oxidase, the last enzyme in the mitochondrial electron transport chain which drives oxidative phosphorylation. The respiratory chain contains 3 multisubunit complexes succinate dehydrogenase (complex II, CII), ubiquinol-cytochrome c oxidoreductase (cytochrome b-c1 complex, complex III, CIII) and cytochrome c oxidase (complex IV, CIV), that cooperate to transfer electrons derived from NADH and succinate to molecular oxygen, creating an electrochemical gradient over the inner membrane that drives transmembrane transport and the ATP synthase. Cytochrome c oxidase is the component of the respiratory chain that catalyzes the reduction of oxygen to water. Electrons originating from reduced cytochrome c in the intermembrane space (IMS) are transferred via the dinuclear copper A center (CU(A)) of subunit 2 and heme A of subunit 1 to the active site in subunit 1, a binuclear center (BNC) formed by heme A3 and copper B (CU(B)). The BNC reduces molecular oxygen to 2 water molecules using 4 electrons from cytochrome c in the IMS and 4 protons from the mitochondrial matrix. This is Cytochrome c oxidase subunit 2 (COX2) from Brettanomyces naardenensis (Yeast).